Consider the following 306-residue polypeptide: Homoserine kinase (306 aa).

Position 91 to 101 (P91 to T101) interacts with ATP.

Belongs to the GHMP kinase family. Homoserine kinase subfamily.

Its subcellular location is the cytoplasm. The catalysed reaction is L-homoserine + ATP = O-phospho-L-homoserine + ADP + H(+). Its pathway is amino-acid biosynthesis; L-threonine biosynthesis; L-threonine from L-aspartate: step 4/5. In terms of biological role, catalyzes the ATP-dependent phosphorylation of L-homoserine to L-homoserine phosphate. This chain is Homoserine kinase, found in Synechocystis sp. (strain ATCC 27184 / PCC 6803 / Kazusa).